The chain runs to 105 residues: UPF0145 protein GK1405 (105 aa).

It belongs to the UPF0145 family.

This Geobacillus kaustophilus (strain HTA426) protein is UPF0145 protein GK1405.